The primary structure comprises 516 residues: H/ACA ribonucleoprotein complex subunit DKC1 (516 aa).

The tract at residues 1–24 is disordered; that stretch reads MADGDGSSVKKRRKKDKRSLPDED. Aspartate 123 (nucleophile) is an active-site residue. The region spanning 294–369 is the PUA domain; that stretch reads HKRLVMKDSA…VVAKIKRVIM (76 aa). The disordered stretch occupies residues 422–516; the sequence is KKEAAKVPQA…KQKEVEESSE (95 aa). The segment covering 434–446 has biased composition (basic and acidic residues); it reads EVERAPKRKRESE. Over residues 453–464 the composition is skewed to pro residues; it reads SPPPSPATPPPE. Residues 463 to 516 are a coiled coil; the sequence is PEELSKKEKKKKKKEKKAKEAAESGEEQVEVISESSAKKKKKKKKQKEVEESSE. A compositionally biased stretch (basic residues) spans 469–478; it reads KEKKKKKKEK.

It belongs to the pseudouridine synthase TruB family. In terms of assembly, part of the H/ACA small nucleolar ribonucleoprotein (H/ACA snoRNP) complex, which contains NHP2/NOLA2, GAR1/NOLA1, NOP10/NOLA3, and DKC1/NOLA4, which is presumed to be the catalytic subunit. The complex contains a stable core formed by binding of one or two NOP10-DKC1 heterodimers to NHP2; GAR1 subsequently binds to this core via DKC1. The complex binds a box H/ACA small nucleolar RNA (snoRNA), which may target the specific site of modification within the RNA substrate.

The protein resides in the nucleus. The protein localises to the nucleolus. It is found in the cajal body. The catalysed reaction is uridine in 5S rRNA = pseudouridine in 5S rRNA. In terms of biological role, catalytic subunit of H/ACA small nucleolar ribonucleoprotein (H/ACA snoRNP) complex, which catalyzes pseudouridylation of rRNA. This involves the isomerization of uridine such that the ribose is subsequently attached to C5, instead of the normal N1. Each rRNA can contain up to 100 pseudouridine ('psi') residues, which may serve to stabilize the conformation of rRNAs. Required for ribosome biogenesis and telomere maintenance. The protein is H/ACA ribonucleoprotein complex subunit DKC1 (DKC1) of Gallus gallus (Chicken).